The following is a 311-amino-acid chain: Syndecan-1 (311 aa).

Residues 1 to 22 (MRRAALWLWLCALALRLQPALL) form the signal peptide. The Extracellular portion of the chain corresponds to 23–255 (HSVAVNMPPE…GLLDRKEVLG (233 aa)). Disordered regions lie at residues 31–85 (PEDQ…PDAI) and 141–244 (TMAP…TGAS). Over residues 32 to 42 (EDQDGSGDDSD) the composition is skewed to acidic residues. The O-linked (Xyl...) (chondroitin sulfate) serine glycan is linked to Ser-37. N-linked (GlcNAc...) asparagine glycosylation occurs at Asn-43. 2 O-linked (Xyl...) (heparan sulfate) serine glycosylation sites follow: Ser-45 and Ser-47. The span at 71–84 (TTTATAPEPTSPDA) shows a compositional bias: low complexity. Composition is skewed to basic and acidic residues over residues 151-162 (PHRDVQPDHHET) and 169-180 (GRMEPHRPHVEE). O-linked (Xyl...) (chondroitin sulfate) serine glycans are attached at residues Ser-204 and Ser-214. Low complexity predominate over residues 215 to 226 (GENAAGAAGEPG). Residues 256-276 (GVIAGGLVGLIFAVCLVGFML) traverse the membrane as a helical segment. Residues 277–311 (YRMKKKDEGSYSLEEPKQANGGAYQKPTKQEEFYA) lie on the Cytoplasmic side of the membrane. Residues 285-311 (GSYSLEEPKQANGGAYQKPTKQEEFYA) form a disordered region. Ser-286 is modified (phosphoserine).

Belongs to the syndecan proteoglycan family. In terms of assembly, interacts with CDCP1. Interacts (via C-terminus) with TIAM1 (via PDZ domain). Interacts with MDK. Post-translationally, shedding is enhanced by a number of factors such as heparanase, thrombin or EGF. Also by stress and wound healing. PMA-mediated shedding is inhibited by TIMP3.

The protein resides in the membrane. Its subcellular location is the secreted. It localises to the extracellular exosome. Its function is as follows. Cell surface proteoglycan that contains both heparan sulfate and chondroitin sulfate and that links the cytoskeleton to the interstitial matrix. Regulates exosome biogenesis in concert with SDCBP and PDCD6IP. Able to induce its own expression in dental mesenchymal cells and also in the neighboring dental epithelial cells via an MSX1-mediated pathway. The sequence is that of Syndecan-1 from Bos taurus (Bovine).